The following is a 332-amino-acid chain: Probable ABC transporter permease protein YphD (332 aa).

10 consecutive transmembrane segments (helical) span residues 28-48, 63-83, 84-104, 105-125, 131-151, 172-192, 222-242, 251-271, 278-298, and 303-323; these read GLLV…PGFI, IGIA…DVSV, GPMV…EVPL, AVAC…AGVL, VPSF…GLFM, FLGV…FVFI, VRIL…ILLA, GAAN…GTAL, LFGT…LVLL, and FFQQ…NILL.

This sequence belongs to the binding-protein-dependent transport system permease family. AraH/RbsC subfamily.

It localises to the cell inner membrane. In terms of biological role, probably part of the binding-protein-dependent transport system YphDEF. Probably responsible for the translocation of the substrate across the membrane. The protein is Probable ABC transporter permease protein YphD (yphD) of Escherichia coli (strain K12).